We begin with the raw amino-acid sequence, 122 residues long: Small ribosomal subunit protein uS13 (122 aa).

The segment at 99-122 is disordered; that stretch reads RGQRTHTNARTRKGPAKAIAGKKK.

The protein belongs to the universal ribosomal protein uS13 family. Part of the 30S ribosomal subunit. Forms a loose heterodimer with protein S19. Forms two bridges to the 50S subunit in the 70S ribosome.

Functionally, located at the top of the head of the 30S subunit, it contacts several helices of the 16S rRNA. In the 70S ribosome it contacts the 23S rRNA (bridge B1a) and protein L5 of the 50S subunit (bridge B1b), connecting the 2 subunits; these bridges are implicated in subunit movement. Contacts the tRNAs in the A and P-sites. The polypeptide is Small ribosomal subunit protein uS13 (Cereibacter sphaeroides (strain ATCC 17029 / ATH 2.4.9) (Rhodobacter sphaeroides)).